The primary structure comprises 206 residues: Small ribosomal subunit protein uS4 (206 aa).

The 61-residue stretch at 96–156 folds into the S4 RNA-binding domain; sequence CRLDNVVYRM…EKAKNQLRIA (61 aa).

Belongs to the universal ribosomal protein uS4 family. Part of the 30S ribosomal subunit. Contacts protein S5. The interaction surface between S4 and S5 is involved in control of translational fidelity.

Its function is as follows. One of the primary rRNA binding proteins, it binds directly to 16S rRNA where it nucleates assembly of the body of the 30S subunit. In terms of biological role, with S5 and S12 plays an important role in translational accuracy. The chain is Small ribosomal subunit protein uS4 from Azotobacter vinelandii (strain DJ / ATCC BAA-1303).